The primary structure comprises 337 residues: Protein hairy (337 aa).

The tract at residues 29–48 is interaction with Topors; the sequence is KSDRRSNKPIMEKRRRARIN. Positions 31-88 constitute a bHLH domain; that stretch reads DRRSNKPIMEKRRRARINNCLNELKTLILDATKKDPARHSKLEKADILEKTVKHLQEL. One can recognise an Orange domain in the interval 107-136; the sequence is FKAGFADCVNEVSRFPGIEPAQRRRLLQHL. Disordered stretches follow at residues 146-178 and 259-311; these read ELHQQQRQQQQQSIHAQMLPSPPSSPEQDSQQG and MPQR…VIQR. Over residues 263-301 the composition is skewed to low complexity; it reads TASTGSASSHSSAGYESAPGSSSSCSYAPPSPANSSYEP. Residues 334–337 carry the WRPW motif motif; sequence WRPW.

As to quaternary structure, transcription repression requires formation of a complex with a corepressor protein (Groucho). Interacts with gro (via WPRW motif) and Topors. In terms of processing, ubiquitinated by Topors.

It is found in the nucleus. Pair-rule protein that regulates embryonic segmentation and adult bristle patterning. Transcriptional repressor of genes that require a bHLH protein for their transcription (e.g. ftz). This Drosophila melanogaster (Fruit fly) protein is Protein hairy.